The sequence spans 258 residues: Ribosomal RNA small subunit methyltransferase A (258 aa).

His13, Leu15, Gly40, Glu61, Asp85, and Asn106 together coordinate S-adenosyl-L-methionine.

This sequence belongs to the class I-like SAM-binding methyltransferase superfamily. rRNA adenine N(6)-methyltransferase family. RsmA subfamily.

The protein resides in the cytoplasm. The catalysed reaction is adenosine(1518)/adenosine(1519) in 16S rRNA + 4 S-adenosyl-L-methionine = N(6)-dimethyladenosine(1518)/N(6)-dimethyladenosine(1519) in 16S rRNA + 4 S-adenosyl-L-homocysteine + 4 H(+). Specifically dimethylates two adjacent adenosines (A1518 and A1519) in the loop of a conserved hairpin near the 3'-end of 16S rRNA in the 30S particle. May play a critical role in biogenesis of 30S subunits. This is Ribosomal RNA small subunit methyltransferase A from Porphyromonas gingivalis (strain ATCC 33277 / DSM 20709 / CIP 103683 / JCM 12257 / NCTC 11834 / 2561).